The chain runs to 731 residues: Catalase-peroxidase (731 aa).

Positions 98–227 (WHAAGTYRTA…LAAIQMGLIY (130 aa)) form a cross-link, tryptophyl-tyrosyl-methioninium (Trp-Tyr) (with M-254). His99 serves as the catalytic Proton acceptor. The segment at residues 227–254 (YVNPEGPQGNPHDDEGMARDMKETFKRM) is a cross-link (tryptophyl-tyrosyl-methioninium (Tyr-Met) (with W-98)). His269 lines the heme b pocket.

The protein belongs to the peroxidase family. Peroxidase/catalase subfamily. Homodimer or homotetramer. The cofactor is heme b. Post-translationally, formation of the three residue Trp-Tyr-Met cross-link is important for the catalase, but not the peroxidase activity of the enzyme.

It carries out the reaction H2O2 + AH2 = A + 2 H2O. The enzyme catalyses 2 H2O2 = O2 + 2 H2O. In terms of biological role, bifunctional enzyme with both catalase and broad-spectrum peroxidase activity. The protein is Catalase-peroxidase of Sphingopyxis alaskensis (strain DSM 13593 / LMG 18877 / RB2256) (Sphingomonas alaskensis).